Consider the following 192-residue polypeptide: Interleukin-18 (192 aa).

Residues 1–35 (MAAIPVDDCINFVGMKFIDNTLYFVADSDENLETD) constitute a propeptide that is removed on maturation.

This sequence belongs to the IL-1 family. Forms a ternary complex with ligand-binding receptor subunit IL18R1 and signaling receptor subunit IL18RAP at the plasma membrane. Mature IL18 first binds to IL18R1 forming a low affinity binary complex, which then interacts with IL18RAP to form a high affinity ternary complex that signals inside the cell. Interacts with cargo receptor TMED10; the interaction mediates the translocation from the cytoplasm into the ERGIC (endoplasmic reticulum-Golgi intermediate compartment) and thereby secretion. Post-translationally, the pro-IL-18 precursor is processed by CASP1, CASP4 or CASP5 to yield its mature, active form. The pro-IL-18 precursor features autoinhibitory interactions between the propeptide and the post-cleavage-site region, preventing recognition by the IL18R1 receptor. Processing by CASP1, CASP4 or CASP5 induces conformational changes to generate critical receptor-binding sites. The mature form is then secreted and released in the extracellular milieu by passing through the gasdermin-D (GSDMD) pore. In contrast, cleavage by CASP3 inactivates IL18.

The protein localises to the cytoplasm. The protein resides in the cytosol. Its subcellular location is the secreted. Its function is as follows. Pro-inflammatory cytokine primarily involved in epithelial barrier repair, polarized T-helper 1 (Th1) cell and natural killer (NK) cell immune responses. Upon binding to IL18R1 and IL18RAP, forms a signaling ternary complex which activates NF-kappa-B, triggering synthesis of inflammatory mediators. Synergizes with IL12/interleukin-12 to induce IFNG synthesis from T-helper 1 (Th1) cells and natural killer (NK) cells. Involved in transduction of inflammation downstream of pyroptosis: its mature form is specifically released in the extracellular milieu by passing through the gasdermin-D (GSDMD) pore. The protein is Interleukin-18 (IL18) of Felis catus (Cat).